A 609-amino-acid chain; its full sequence is Probable ubiquitin-conjugating enzyme E2 25 (609 aa).

Disordered stretches follow at residues 70–99 (EEDE…LDPE) and 151–185 (ADKE…SQFS). Residues 156–178 (ASSSKSSHANNGNNSSKKATKAS) are compositionally biased toward low complexity. The UBC core domain maps to 332–492 (DWAKRIQDEW…TFILSLKTMV (161 aa)). The active-site Glycyl thioester intermediate is the Cys-418.

Belongs to the ubiquitin-conjugating enzyme family. As to expression, expressed in seeds, pistils, siliques, hypocotyls and leaves.

The catalysed reaction is S-ubiquitinyl-[E1 ubiquitin-activating enzyme]-L-cysteine + [E2 ubiquitin-conjugating enzyme]-L-cysteine = [E1 ubiquitin-activating enzyme]-L-cysteine + S-ubiquitinyl-[E2 ubiquitin-conjugating enzyme]-L-cysteine.. Its pathway is protein modification; protein ubiquitination. Functionally, accepts the ubiquitin from the E1 complex and catalyzes its covalent attachment to other proteins. The protein is Probable ubiquitin-conjugating enzyme E2 25 (UBC25) of Arabidopsis thaliana (Mouse-ear cress).